The primary structure comprises 114 residues: Thioredoxin H1 (114 aa).

Alanine 2 is modified (N-acetylalanine). The region spanning 2–114 (ASEEGQVIAC…LQSTIAKHLA (113 aa)) is the Thioredoxin domain. Residues cysteine 40 and cysteine 43 each act as nucleophile in the active site. Residues cysteine 40 and cysteine 43 are joined by a disulfide bond.

The protein belongs to the thioredoxin family. Plant H-type subfamily. Interacts with FBA6. Interacts with MDH1.

The protein resides in the cytoplasm. Thiol-disulfide oxidoreductase involved in the redox regulation of a number of cytosolic enzymes. Activates the cytosolic malate dehydrogenase (MDH) probably by reducing an interchain disulfide bond of the inactive MDH homodimer. Possesses insulin disulfide bonds reducing activity. In Arabidopsis thaliana (Mouse-ear cress), this protein is Thioredoxin H1 (TRX1).